The primary structure comprises 91 residues: Small ribosomal subunit protein uS19 (91 aa).

It belongs to the universal ribosomal protein uS19 family.

Its function is as follows. Protein S19 forms a complex with S13 that binds strongly to the 16S ribosomal RNA. This Bordetella petrii (strain ATCC BAA-461 / DSM 12804 / CCUG 43448) protein is Small ribosomal subunit protein uS19.